Here is a 338-residue protein sequence, read N- to C-terminus: tRNA N6-adenosine threonylcarbamoyltransferase (338 aa).

Fe cation-binding residues include H111 and H115. Substrate is bound by residues 134-138 (LVSGG), D167, G180, and N272. D300 is a Fe cation binding site.

This sequence belongs to the KAE1 / TsaD family. It depends on Fe(2+) as a cofactor.

It localises to the cytoplasm. The catalysed reaction is L-threonylcarbamoyladenylate + adenosine(37) in tRNA = N(6)-L-threonylcarbamoyladenosine(37) in tRNA + AMP + H(+). Its function is as follows. Required for the formation of a threonylcarbamoyl group on adenosine at position 37 (t(6)A37) in tRNAs that read codons beginning with adenine. Is involved in the transfer of the threonylcarbamoyl moiety of threonylcarbamoyl-AMP (TC-AMP) to the N6 group of A37, together with TsaE and TsaB. TsaD likely plays a direct catalytic role in this reaction. The chain is tRNA N6-adenosine threonylcarbamoyltransferase from Shewanella sp. (strain ANA-3).